We begin with the raw amino-acid sequence, 116 residues long: Iron-sulfur cluster insertion protein ErpA (116 aa).

Positions 44, 108, and 110 each coordinate iron-sulfur cluster.

It belongs to the HesB/IscA family. As to quaternary structure, homodimer. Iron-sulfur cluster is required as a cofactor.

Functionally, required for insertion of 4Fe-4S clusters for at least IspG. This chain is Iron-sulfur cluster insertion protein ErpA, found in Pseudomonas fluorescens (strain Pf0-1).